Consider the following 106-residue polypeptide: Large ribosomal subunit protein eL30 (106 aa).

It belongs to the eukaryotic ribosomal protein eL30 family.

This is Large ribosomal subunit protein eL30 from Methanococcus maripaludis (strain C5 / ATCC BAA-1333).